The primary structure comprises 209 residues: Outer-membrane lipoprotein LolB (209 aa).

The signal sequence occupies residues 1 to 17 (MATVFSRALGALVLGVA). Cys-18 is lipidated: N-palmitoyl cysteine. The S-diacylglycerol cysteine moiety is linked to residue Cys-18.

Belongs to the LolB family. In terms of assembly, monomer.

Its subcellular location is the cell outer membrane. Functionally, plays a critical role in the incorporation of lipoproteins in the outer membrane after they are released by the LolA protein. This chain is Outer-membrane lipoprotein LolB, found in Ralstonia nicotianae (strain ATCC BAA-1114 / GMI1000) (Ralstonia solanacearum).